The primary structure comprises 329 residues: Putative methylthioribose-1-phosphate isomerase (329 aa).

Substrate-binding positions include 50-52 (RGA), Arg-84, and Gln-182. The Proton donor role is filled by Asp-223. Residue 233-234 (NK) participates in substrate binding.

It belongs to the eIF-2B alpha/beta/delta subunits family. MtnA subfamily.

It carries out the reaction 5-(methylsulfanyl)-alpha-D-ribose 1-phosphate = 5-(methylsulfanyl)-D-ribulose 1-phosphate. Catalyzes the interconversion of methylthioribose-1-phosphate (MTR-1-P) into methylthioribulose-1-phosphate (MTRu-1-P). In Methanocaldococcus jannaschii (strain ATCC 43067 / DSM 2661 / JAL-1 / JCM 10045 / NBRC 100440) (Methanococcus jannaschii), this protein is Putative methylthioribose-1-phosphate isomerase.